Reading from the N-terminus, the 251-residue chain is GTP cyclohydrolase 1 type 2 homolog (251 aa).

A divalent metal cation-binding residues include His62, His63, Asp103, His215, and Glu219.

Belongs to the GTP cyclohydrolase I type 2/NIF3 family. Homohexamer.

The chain is GTP cyclohydrolase 1 type 2 homolog from Mycoplasmopsis pulmonis (strain UAB CTIP) (Mycoplasma pulmonis).